Reading from the N-terminus, the 485-residue chain is E3 ubiquitin-protein ligase TRIM68 (485 aa).

The RING-type zinc finger occupies 16 to 61 (CPICMTFLREPVSISCGHTFCHSCLSGLWKLPGESQNLSYTCPLCR). The B box-type zinc finger occupies 93–134 (LKTDVCDLHKEQLTMFCKEDDMVTCEACKQSPEHEAHSVVPI). Zn(2+)-binding residues include Cys-98, His-101, Cys-120, and His-126. Positions 144–226 (KLQQALEHLR…EQEKGETASK (83 aa)) form a coiled coil. One can recognise a B30.2/SPRY domain in the interval 285-483 (LKTDCRVLGL…TPLTICTLGG (199 aa)).

This sequence belongs to the TRIM/RBCC family. As to quaternary structure, interacts with AR/androgen receptor (via ligand-binding domain). Interacts with KAT5/TIP60. In terms of processing, auto-ubiquitinated.

The protein resides in the cytoplasm. Its subcellular location is the perinuclear region. It is found in the nucleus. The catalysed reaction is S-ubiquitinyl-[E2 ubiquitin-conjugating enzyme]-L-cysteine + [acceptor protein]-L-lysine = [E2 ubiquitin-conjugating enzyme]-L-cysteine + N(6)-ubiquitinyl-[acceptor protein]-L-lysine.. Its pathway is protein modification; protein ubiquitination. Its function is as follows. Functions as a ubiquitin E3 ligase. Acts as a coactivator of androgen receptor (AR) depending on its ubiquitin ligase activity. This chain is E3 ubiquitin-protein ligase TRIM68 (Trim68), found in Mus musculus (Mouse).